The following is a 347-amino-acid chain: Lipoyl synthase (347 aa).

[4Fe-4S] cluster-binding residues include C55, C60, C66, C81, C85, C88, and S292. One can recognise a Radical SAM core domain in the interval 67–281 (WEDREASFLI…SEAAYDMGFP (215 aa)).

The protein belongs to the radical SAM superfamily. Lipoyl synthase family. [4Fe-4S] cluster is required as a cofactor.

It localises to the cytoplasm. It catalyses the reaction [[Fe-S] cluster scaffold protein carrying a second [4Fe-4S](2+) cluster] + N(6)-octanoyl-L-lysyl-[protein] + 2 oxidized [2Fe-2S]-[ferredoxin] + 2 S-adenosyl-L-methionine + 4 H(+) = [[Fe-S] cluster scaffold protein] + N(6)-[(R)-dihydrolipoyl]-L-lysyl-[protein] + 4 Fe(3+) + 2 hydrogen sulfide + 2 5'-deoxyadenosine + 2 L-methionine + 2 reduced [2Fe-2S]-[ferredoxin]. Its pathway is protein modification; protein lipoylation via endogenous pathway; protein N(6)-(lipoyl)lysine from octanoyl-[acyl-carrier-protein]: step 2/2. Functionally, catalyzes the radical-mediated insertion of two sulfur atoms into the C-6 and C-8 positions of the octanoyl moiety bound to the lipoyl domains of lipoate-dependent enzymes, thereby converting the octanoylated domains into lipoylated derivatives. This Corynebacterium urealyticum (strain ATCC 43042 / DSM 7109) protein is Lipoyl synthase.